A 77-amino-acid chain; its full sequence is Acyl carrier protein (77 aa).

Residues 2–77 enclose the Carrier domain; the sequence is SNIEERVKKI…AAIDYVTANQ (76 aa). Ser37 bears the O-(pantetheine 4'-phosphoryl)serine mark.

It belongs to the acyl carrier protein (ACP) family. Post-translationally, 4'-phosphopantetheine is transferred from CoA to a specific serine of apo-ACP by AcpS. This modification is essential for activity because fatty acids are bound in thioester linkage to the sulfhydryl of the prosthetic group.

The protein localises to the cytoplasm. Its pathway is lipid metabolism; fatty acid biosynthesis. Carrier of the growing fatty acid chain in fatty acid biosynthesis. The chain is Acyl carrier protein from Colwellia psychrerythraea (strain 34H / ATCC BAA-681) (Vibrio psychroerythus).